Here is a 508-residue protein sequence, read N- to C-terminus: 4-trimethylaminobutyraldehyde dehydrogenase A (508 aa).

Residues Lys194 and 246-250 (GSVPT) each bind NAD(+). The active-site Proton acceptor is Glu268. The Nucleophile role is filled by Cys302. NAD(+) is bound at residue Glu405.

Belongs to the aldehyde dehydrogenase family. Homotetramer.

The protein resides in the cytoplasm. It is found in the cytosol. It catalyses the reaction 4-(trimethylamino)butanal + NAD(+) + H2O = 4-(trimethylamino)butanoate + NADH + 2 H(+). It carries out the reaction an aldehyde + NAD(+) + H2O = a carboxylate + NADH + 2 H(+). Its pathway is amine and polyamine biosynthesis; carnitine biosynthesis. Functionally, converts gamma-trimethylaminobutyraldehyde into gamma-butyrobetaine with high efficiency (in vitro). Can catalyze the irreversible oxidation of a broad range of aldehydes to the corresponding acids in an NAD-dependent reaction, but with low efficiency. The chain is 4-trimethylaminobutyraldehyde dehydrogenase A (aldh9a1a) from Danio rerio (Zebrafish).